Here is a 210-residue protein sequence, read N- to C-terminus: Small ribosomal subunit protein uS3 (210 aa).

One can recognise a KH type-2 domain in the interval 38-106 (IRAFLKKRLY…EIFINIIEVR (69 aa)).

Belongs to the universal ribosomal protein uS3 family. Part of the 30S ribosomal subunit. Forms a tight complex with proteins S10 and S14.

Functionally, binds the lower part of the 30S subunit head. Binds mRNA in the 70S ribosome, positioning it for translation. The polypeptide is Small ribosomal subunit protein uS3 (Pelobacter propionicus (strain DSM 2379 / NBRC 103807 / OttBd1)).